The chain runs to 607 residues: Methylmalonate-semialdehyde dehydrogenase [acylating], mitochondrial (607 aa).

The tract at residues 1–69 (MVRVKQKNLE…KLRSSSSTTT (69 aa)) is disordered. The N-terminal 98 residues, 1–98 (MVRVKQKNLE…QFLALRSSWL (98 aa)), are a transit peptide targeting the mitochondrion. Over residues 9–30 (LESYRSNGTYPPTWRNPTTSFA) the composition is skewed to polar residues. Residues 42–51 (LKSKTKRRRL) show a composition bias toward basic residues. Positions 259, 283, 286, 287, and 336 each coordinate NAD(+). Residue Cys391 is the Nucleophile of the active site. An NAD(+)-binding site is contributed by Glu491.

The protein belongs to the aldehyde dehydrogenase family.

Its subcellular location is the mitochondrion. It catalyses the reaction 2-methyl-3-oxopropanoate + NAD(+) + CoA + H2O = propanoyl-CoA + hydrogencarbonate + NADH + H(+). The protein is Methylmalonate-semialdehyde dehydrogenase [acylating], mitochondrial (ALDH6B2) of Arabidopsis thaliana (Mouse-ear cress).